We begin with the raw amino-acid sequence, 152 residues long: Ribonuclease pancreatic beta-type (152 aa).

Residues 1–25 form the signal peptide; that stretch reads MGLEKSFILFSLLVLVLGWVQPSLG. Basic and acidic residues predominate over residues 31–45; that stretch reads SSADKFKRQHMDPES. A disordered region spans residues 31 to 53; sequence SSADKFKRQHMDPESPSKSSPTY. Substrate contacts are provided by lysine 35 and arginine 38. Histidine 40 acts as the Proton acceptor in catalysis. Disulfide bonds link cysteine 54–cysteine 112, cysteine 68–cysteine 123, cysteine 86–cysteine 138, and cysteine 93–cysteine 100. Residues 69–73, lysine 94, and arginine 113 each bind substrate; that span reads KPVNT. Residue histidine 147 is the Proton donor of the active site.

This sequence belongs to the pancreatic ribonuclease family. As to quaternary structure, monomer.

It is found in the secreted. It catalyses the reaction an [RNA] containing cytidine + H2O = an [RNA]-3'-cytidine-3'-phosphate + a 5'-hydroxy-ribonucleotide-3'-[RNA].. The catalysed reaction is an [RNA] containing uridine + H2O = an [RNA]-3'-uridine-3'-phosphate + a 5'-hydroxy-ribonucleotide-3'-[RNA].. Functionally, endonuclease that catalyzes the cleavage of RNA on the 3' side of pyrimidine nucleotides. Acts on single-stranded and double-stranded RNA. This chain is Ribonuclease pancreatic beta-type, found in Rattus exulans (Polynesian rat).